The following is a 121-amino-acid chain: Holo-[acyl-carrier-protein] synthase (121 aa).

Positions 8 and 58 each coordinate Mg(2+).

Belongs to the P-Pant transferase superfamily. AcpS family. Mg(2+) is required as a cofactor.

The protein resides in the cytoplasm. It catalyses the reaction apo-[ACP] + CoA = holo-[ACP] + adenosine 3',5'-bisphosphate + H(+). Functionally, transfers the 4'-phosphopantetheine moiety from coenzyme A to a Ser of acyl-carrier-protein. The protein is Holo-[acyl-carrier-protein] synthase of Bacillus pumilus (strain SAFR-032).